Here is a 411-residue protein sequence, read N- to C-terminus: Translation initiation factor 2 subunit gamma (411 aa).

Positions Gln9 to Lys203 constitute a tr-type G domain. Residues Gly18–Thr25 form a G1 region. Asp21, Thr25, Gly46, and Thr48 together coordinate Mg(2+). Asp21–Thr26 is a GTP binding site. The interval Gly46–Lys50 is G2. Positions 61, 64, 73, and 76 each coordinate Zn(2+). Residues Asp90–Gly93 form a G3 region. GTP contacts are provided by residues Asn146–Glu149 and Ser181–Leu183. Residues Asn146 to Glu149 form a G4 region. The tract at residues Ser181–Leu183 is G5.

This sequence belongs to the TRAFAC class translation factor GTPase superfamily. Classic translation factor GTPase family. EIF2G subfamily. As to quaternary structure, heterotrimer composed of an alpha, a beta and a gamma chain. The cofactor is Mg(2+).

It carries out the reaction GTP + H2O = GDP + phosphate + H(+). Functionally, eIF-2 functions in the early steps of protein synthesis by forming a ternary complex with GTP and initiator tRNA. This chain is Translation initiation factor 2 subunit gamma, found in Pyrococcus horikoshii (strain ATCC 700860 / DSM 12428 / JCM 9974 / NBRC 100139 / OT-3).